Here is a 258-residue protein sequence, read N- to C-terminus: GPI alpha-1,4-mannosyltransferase I, stabilizing subunit (258 aa).

Residues 1-21 (MAARVAAVRAAAWLLLGAATG) form the signal peptide. The Lumenal portion of the chain corresponds to 22–230 (LTRGPAAAFT…PVGLTVHTSL (209 aa)). Asparagine 103 carries N-linked (GlcNAc...) asparagine glycosylation. Residues 231-251 (VCSVTLLITILCSTLILVAVF) traverse the membrane as a helical segment. The Cytoplasmic segment spans residues 252–258 (KYGHFSL).

It belongs to the PIGX family. In terms of assembly, part of the glycosylphosphatidylinositol-mannosyltransferase I complex that is composed of PIGM and PIGX. Interacts with PIGM; PIGX stabilizes PIGM.

It localises to the endoplasmic reticulum membrane. It participates in glycolipid biosynthesis; glycosylphosphatidylinositol-anchor biosynthesis. In terms of biological role, stabilizing subunit of the glycosylphosphatidylinositol-mannosyltransferase I complex which catalyzes the transfer of the first mannose, via an alpha-1,4 bond from a dolichol-phosphate-mannose (Dol-P-Man) to the glucosaminyl acyl phosphatidylinositol (GlcN-(acyl)PI) intermediate to generate alpha-D-Man-(1-&gt;4)-alpha-D-GlcN-(1-&gt;6)-(1-radyl,2-acyl-sn-glycero-3-phospho)-2-acyl-inositol and participates in the sixth step of the glycosylphosphatidylinositol-anchor biosynthesis. Probably acts by stabilizing the mannosyltransferase PIGM. The sequence is that of GPI alpha-1,4-mannosyltransferase I, stabilizing subunit from Homo sapiens (Human).